The primary structure comprises 310 residues: tRNA-cytidine(32) 2-sulfurtransferase (310 aa).

The short motif at 48 to 53 is the PP-loop motif element; sequence SGGKDS. 3 residues coordinate [4Fe-4S] cluster: C123, C126, and C214.

It belongs to the TtcA family. Homodimer. Mg(2+) serves as cofactor. It depends on [4Fe-4S] cluster as a cofactor.

The protein localises to the cytoplasm. The catalysed reaction is cytidine(32) in tRNA + S-sulfanyl-L-cysteinyl-[cysteine desulfurase] + AH2 + ATP = 2-thiocytidine(32) in tRNA + L-cysteinyl-[cysteine desulfurase] + A + AMP + diphosphate + H(+). The protein operates within tRNA modification. Catalyzes the ATP-dependent 2-thiolation of cytidine in position 32 of tRNA, to form 2-thiocytidine (s(2)C32). The sulfur atoms are provided by the cysteine/cysteine desulfurase (IscS) system. This chain is tRNA-cytidine(32) 2-sulfurtransferase, found in Vibrio vulnificus (strain CMCP6).